Here is a 417-residue protein sequence, read N- to C-terminus: Serine hydroxymethyltransferase (417 aa).

(6S)-5,6,7,8-tetrahydrofolate contacts are provided by residues L121 and 125–127 (GHL). K230 carries the N6-(pyridoxal phosphate)lysine modification. A (6S)-5,6,7,8-tetrahydrofolate-binding site is contributed by 355 to 357 (SPF).

The protein belongs to the SHMT family. In terms of assembly, homodimer. Pyridoxal 5'-phosphate is required as a cofactor.

Its subcellular location is the cytoplasm. The catalysed reaction is (6R)-5,10-methylene-5,6,7,8-tetrahydrofolate + glycine + H2O = (6S)-5,6,7,8-tetrahydrofolate + L-serine. Its pathway is one-carbon metabolism; tetrahydrofolate interconversion. It functions in the pathway amino-acid biosynthesis; glycine biosynthesis; glycine from L-serine: step 1/1. Functionally, catalyzes the reversible interconversion of serine and glycine with tetrahydrofolate (THF) serving as the one-carbon carrier. This reaction serves as the major source of one-carbon groups required for the biosynthesis of purines, thymidylate, methionine, and other important biomolecules. Also exhibits THF-independent aldolase activity toward beta-hydroxyamino acids, producing glycine and aldehydes, via a retro-aldol mechanism. In Nitrosococcus oceani (strain ATCC 19707 / BCRC 17464 / JCM 30415 / NCIMB 11848 / C-107), this protein is Serine hydroxymethyltransferase.